The chain runs to 418 residues: MTLLALGINHKTAPVSLRERVTFSPDTLDQALESLLSQPMVQGGVVLSTCNRTELYLSVEEQDNLHDKLVRWLCDYHNLDEEEVRNSLYWHHDNDAVSHLMRVASGLDSLVLGEPQILGQVKKAFADSGRGHANASELERMFQKSFSVAKRVRTETDIGASAVSVAFAACTLARQIFESLSTVTVMLVGAGETIELAARHLREHNVQKMIIANRTRERAQRLADEVGAEVIGLGDIDERLKDADIIISSTASPLPIIGKGMMERALKARRNQPMLLVDIAVPRDVEPEVGKLANAYLYSVDDLQSIIQHNLAQRKAAAVQAESIVEQEACEFMAWLRAQSVSETIREYRAQADQVREELTSKALAALRTGGDAEAIMQDLARKLTNRLIHTPTKSLQQAARDGDDERLHILRNSLGLE.

Substrate contacts are provided by residues 49–52 (TCNR), S109, 114–116 (EPQ), and Q120. C50 serves as the catalytic Nucleophile. 189 to 194 (GAGETI) contacts NADP(+).

The protein belongs to the glutamyl-tRNA reductase family. As to quaternary structure, homodimer.

It catalyses the reaction (S)-4-amino-5-oxopentanoate + tRNA(Glu) + NADP(+) = L-glutamyl-tRNA(Glu) + NADPH + H(+). It participates in porphyrin-containing compound metabolism; protoporphyrin-IX biosynthesis; 5-aminolevulinate from L-glutamyl-tRNA(Glu): step 1/2. In terms of biological role, catalyzes the NADPH-dependent reduction of glutamyl-tRNA(Glu) to glutamate 1-semialdehyde (GSA). The protein is Glutamyl-tRNA reductase of Cronobacter sakazakii (strain ATCC BAA-894) (Enterobacter sakazakii).